Consider the following 184-residue polypeptide: Endoribonuclease YbeY (184 aa).

2 stretches are compositionally biased toward acidic residues: residues 1-11 and 19-29; these read MTVEVGADENP and DGAGDESDDED. The segment at 1-37 is disordered; sequence MTVEVGADENPDFAHDETDGAGDESDDEDAQGRDPEL. The Zn(2+) site is built by H146, H150, and H156.

The protein belongs to the endoribonuclease YbeY family. Zn(2+) is required as a cofactor.

Its subcellular location is the cytoplasm. In terms of biological role, single strand-specific metallo-endoribonuclease involved in late-stage 70S ribosome quality control and in maturation of the 3' terminus of the 16S rRNA. This is Endoribonuclease YbeY from Burkholderia mallei (strain ATCC 23344).